The sequence spans 214 residues: tRNA (guanine-N(7)-)-methyltransferase (214 aa).

Positions 44, 69, 96, and 118 each coordinate S-adenosyl-L-methionine. D118 is a catalytic residue. Residues K122, D154, and 191-194 contribute to the substrate site; that span reads TEYE.

The protein belongs to the class I-like SAM-binding methyltransferase superfamily. TrmB family.

It carries out the reaction guanosine(46) in tRNA + S-adenosyl-L-methionine = N(7)-methylguanosine(46) in tRNA + S-adenosyl-L-homocysteine. It participates in tRNA modification; N(7)-methylguanine-tRNA biosynthesis. Its function is as follows. Catalyzes the formation of N(7)-methylguanine at position 46 (m7G46) in tRNA. This chain is tRNA (guanine-N(7)-)-methyltransferase, found in Listeria welshimeri serovar 6b (strain ATCC 35897 / DSM 20650 / CCUG 15529 / CIP 8149 / NCTC 11857 / SLCC 5334 / V8).